Reading from the N-terminus, the 243-residue chain is 1-(5-phosphoribosyl)-5-[(5-phosphoribosylamino)methylideneamino] imidazole-4-carboxamide isomerase (243 aa).

Asp-8 acts as the Proton acceptor in catalysis. Catalysis depends on Asp-129, which acts as the Proton donor.

This sequence belongs to the HisA/HisF family.

It is found in the cytoplasm. The catalysed reaction is 1-(5-phospho-beta-D-ribosyl)-5-[(5-phospho-beta-D-ribosylamino)methylideneamino]imidazole-4-carboxamide = 5-[(5-phospho-1-deoxy-D-ribulos-1-ylimino)methylamino]-1-(5-phospho-beta-D-ribosyl)imidazole-4-carboxamide. The protein operates within amino-acid biosynthesis; L-histidine biosynthesis; L-histidine from 5-phospho-alpha-D-ribose 1-diphosphate: step 4/9. This chain is 1-(5-phosphoribosyl)-5-[(5-phosphoribosylamino)methylideneamino] imidazole-4-carboxamide isomerase, found in Citrifermentans bemidjiense (strain ATCC BAA-1014 / DSM 16622 / JCM 12645 / Bem) (Geobacter bemidjiensis).